The primary structure comprises 330 residues: Daunorubicin/doxorubicin resistance ATP-binding protein DrrA (330 aa).

One can recognise an ABC transporter domain in the interval 9-239 (IETSGLVKVY…LGSNVLRLRL (231 aa)). 41–48 (GPNGAGKS) contacts ATP.

Belongs to the ABC transporter superfamily. Drug exporter-1 (DrugE1) (TC 3.A.1.105) family. In terms of assembly, the complex is composed of two ATP-binding proteins (DrrA) and two transmembrane proteins (DrrB).

Its subcellular location is the cell membrane. It catalyses the reaction daunorubicin(in) + ATP + H2O = daunorubicin(out) + ADP + phosphate + H(+). Functionally, part of the ABC transporter complex DrrAB involved in daunorubicin and doxorubicin resistance. Responsible for energy coupling to the transport system. Binds ATP or GTP. This is Daunorubicin/doxorubicin resistance ATP-binding protein DrrA (drrA) from Streptomyces peucetius.